Reading from the N-terminus, the 420-residue chain is ATP phosphoribosyltransferase regulatory subunit (420 aa).

It belongs to the class-II aminoacyl-tRNA synthetase family. HisZ subfamily. As to quaternary structure, heteromultimer composed of HisG and HisZ subunits.

The protein localises to the cytoplasm. It participates in amino-acid biosynthesis; L-histidine biosynthesis; L-histidine from 5-phospho-alpha-D-ribose 1-diphosphate: step 1/9. In terms of biological role, required for the first step of histidine biosynthesis. May allow the feedback regulation of ATP phosphoribosyltransferase activity by histidine. The polypeptide is ATP phosphoribosyltransferase regulatory subunit (Bacillus cereus (strain AH820)).